The following is a 319-amino-acid chain: Ribose-phosphate pyrophosphokinase (319 aa).

ATP contacts are provided by residues 41 to 43 and 100 to 101; these read DGE and RQ. Positions 134 and 176 each coordinate Mg(2+). Lysine 199 is a catalytic residue. D-ribose 5-phosphate contacts are provided by residues arginine 201, aspartate 225, and 229–233; that span reads DTAGT.

It belongs to the ribose-phosphate pyrophosphokinase family. Class I subfamily. Homohexamer. The cofactor is Mg(2+).

The protein localises to the cytoplasm. It carries out the reaction D-ribose 5-phosphate + ATP = 5-phospho-alpha-D-ribose 1-diphosphate + AMP + H(+). Its pathway is metabolic intermediate biosynthesis; 5-phospho-alpha-D-ribose 1-diphosphate biosynthesis; 5-phospho-alpha-D-ribose 1-diphosphate from D-ribose 5-phosphate (route I): step 1/1. Involved in the biosynthesis of the central metabolite phospho-alpha-D-ribosyl-1-pyrophosphate (PRPP) via the transfer of pyrophosphoryl group from ATP to 1-hydroxyl of ribose-5-phosphate (Rib-5-P). This is Ribose-phosphate pyrophosphokinase from Clostridium perfringens (strain 13 / Type A).